We begin with the raw amino-acid sequence, 127 residues long: Membrane-bound lysozyme inhibitor of C-type lysozyme (127 aa).

Positions 1–18 (MKKALWLLLAAVPVVLVA) are cleaved as a signal peptide. C19 is lipidated: N-palmitoyl cysteine. Residue C19 is the site of S-diacylglycerol cysteine attachment. A disulfide bridge links C51 with C124.

It belongs to the MliC family. Type 2 subfamily. As to quaternary structure, homodimer.

It is found in the cell outer membrane. Functionally, specifically inhibits C-type lysozymes. This Pseudomonas aeruginosa (strain ATCC 15692 / DSM 22644 / CIP 104116 / JCM 14847 / LMG 12228 / 1C / PRS 101 / PAO1) protein is Membrane-bound lysozyme inhibitor of C-type lysozyme.